The chain runs to 220 residues: Dual specificity phosphatase 29 (220 aa).

The span at 1 to 15 (MTSGEVKTSLKNAYS) shows a compositional bias: polar residues. The segment at 1–29 (MTSGEVKTSLKNAYSSAKRLSPKMEEEGE) is disordered. The Tyrosine-protein phosphatase domain occupies 54-202 (HVNEVWPKLY…LRELDKQLVQ (149 aa)). 146-153 (HCVMGRSR) contributes to the substrate binding site. Catalysis depends on cysteine 147, which acts as the Phosphocysteine intermediate.

Belongs to the protein-tyrosine phosphatase family. Non-receptor class dual specificity subfamily. Homodimer. Interacts with PRKAA2.

The protein resides in the cytoplasm. It is found in the nucleus. The enzyme catalyses O-phospho-L-tyrosyl-[protein] + H2O = L-tyrosyl-[protein] + phosphate. It carries out the reaction O-phospho-L-seryl-[protein] + H2O = L-seryl-[protein] + phosphate. The catalysed reaction is O-phospho-L-threonyl-[protein] + H2O = L-threonyl-[protein] + phosphate. Its function is as follows. Dual specificity phosphatase able to dephosphorylate phosphotyrosine, phosphoserine and phosphothreonine residues within the same substrate, with a preference for phosphotyrosine as a substrate. Involved in the modulation of intracellular signaling cascades. In skeletal muscle regulates systemic glucose homeostasis by activating, AMPK, an energy sensor protein kinase. Affects MAP kinase signaling though modulation of the MAPK1/2 cascade in skeletal muscle promoting muscle cell differentiation, development and atrophy. In Homo sapiens (Human), this protein is Dual specificity phosphatase 29.